Reading from the N-terminus, the 135-residue chain is Prostate and breast cancer overexpressed gene 1 protein (135 aa).

In terms of tissue distribution, expressed in colon, prostate, small intestine, testis and spleen, with lower expression in thymus, ovary, and peripheral blood leukocytes. Up-regulated expression in prostate, breast, and bladder cancer, but not in lung and colon cancer.

It localises to the cytoplasm. It is found in the nucleus. This chain is Prostate and breast cancer overexpressed gene 1 protein (PBOV1), found in Homo sapiens (Human).